A 140-amino-acid chain; its full sequence is Nucleoside diphosphate kinase (140 aa).

Residues Lys11, Phe59, Arg87, Thr93, Arg104, and Asn114 each coordinate ATP. His117 acts as the Pros-phosphohistidine intermediate in catalysis.

The protein belongs to the NDK family. In terms of assembly, homotetramer. It depends on Mg(2+) as a cofactor.

The protein resides in the cytoplasm. It carries out the reaction a 2'-deoxyribonucleoside 5'-diphosphate + ATP = a 2'-deoxyribonucleoside 5'-triphosphate + ADP. The enzyme catalyses a ribonucleoside 5'-diphosphate + ATP = a ribonucleoside 5'-triphosphate + ADP. Major role in the synthesis of nucleoside triphosphates other than ATP. The ATP gamma phosphate is transferred to the NDP beta phosphate via a ping-pong mechanism, using a phosphorylated active-site intermediate. The chain is Nucleoside diphosphate kinase from Ruegeria pomeroyi (strain ATCC 700808 / DSM 15171 / DSS-3) (Silicibacter pomeroyi).